Reading from the N-terminus, the 342-residue chain is L-threonine 3-dehydrogenase (342 aa).

A Zn(2+)-binding site is contributed by Cys38. Residues Thr40 and His43 each act as charge relay system in the active site. 6 residues coordinate Zn(2+): His63, Glu64, Cys93, Cys96, Cys99, and Cys107. NAD(+)-binding positions include Val175, Asp195, Arg200, 262–264 (LGI), and 286–287 (IY).

This sequence belongs to the zinc-containing alcohol dehydrogenase family. In terms of assembly, homotetramer. It depends on Zn(2+) as a cofactor.

It is found in the cytoplasm. The enzyme catalyses L-threonine + NAD(+) = (2S)-2-amino-3-oxobutanoate + NADH + H(+). Its pathway is amino-acid degradation; L-threonine degradation via oxydo-reductase pathway; glycine from L-threonine: step 1/2. Its function is as follows. Catalyzes the NAD(+)-dependent oxidation of L-threonine to 2-amino-3-ketobutyrate. This is L-threonine 3-dehydrogenase from Coxiella burnetii (strain Dugway 5J108-111).